The chain runs to 312 residues: 4-hydroxy-3-methylbut-2-enyl diphosphate reductase (312 aa).

Cysteine 14 serves as a coordination point for [4Fe-4S] cluster. (2E)-4-hydroxy-3-methylbut-2-enyl diphosphate contacts are provided by histidine 43 and histidine 76. Dimethylallyl diphosphate contacts are provided by histidine 43 and histidine 76. Isopentenyl diphosphate-binding residues include histidine 43 and histidine 76. [4Fe-4S] cluster is bound at residue cysteine 98. Residue histidine 125 coordinates (2E)-4-hydroxy-3-methylbut-2-enyl diphosphate. A dimethylallyl diphosphate-binding site is contributed by histidine 125. Histidine 125 contributes to the isopentenyl diphosphate binding site. Catalysis depends on glutamate 127, which acts as the Proton donor. Residue threonine 165 coordinates (2E)-4-hydroxy-3-methylbut-2-enyl diphosphate. Cysteine 195 is a binding site for [4Fe-4S] cluster. Residues serine 223, serine 224, asparagine 225, and serine 269 each contribute to the (2E)-4-hydroxy-3-methylbut-2-enyl diphosphate site. Positions 223, 224, 225, and 269 each coordinate dimethylallyl diphosphate. Isopentenyl diphosphate-binding residues include serine 223, serine 224, asparagine 225, and serine 269.

Belongs to the IspH family. Requires [4Fe-4S] cluster as cofactor.

It catalyses the reaction isopentenyl diphosphate + 2 oxidized [2Fe-2S]-[ferredoxin] + H2O = (2E)-4-hydroxy-3-methylbut-2-enyl diphosphate + 2 reduced [2Fe-2S]-[ferredoxin] + 2 H(+). It carries out the reaction dimethylallyl diphosphate + 2 oxidized [2Fe-2S]-[ferredoxin] + H2O = (2E)-4-hydroxy-3-methylbut-2-enyl diphosphate + 2 reduced [2Fe-2S]-[ferredoxin] + 2 H(+). It functions in the pathway isoprenoid biosynthesis; dimethylallyl diphosphate biosynthesis; dimethylallyl diphosphate from (2E)-4-hydroxy-3-methylbutenyl diphosphate: step 1/1. Its pathway is isoprenoid biosynthesis; isopentenyl diphosphate biosynthesis via DXP pathway; isopentenyl diphosphate from 1-deoxy-D-xylulose 5-phosphate: step 6/6. Functionally, catalyzes the conversion of 1-hydroxy-2-methyl-2-(E)-butenyl 4-diphosphate (HMBPP) into a mixture of isopentenyl diphosphate (IPP) and dimethylallyl diphosphate (DMAPP). Acts in the terminal step of the DOXP/MEP pathway for isoprenoid precursor biosynthesis. This is 4-hydroxy-3-methylbut-2-enyl diphosphate reductase from Leptospira interrogans serogroup Icterohaemorrhagiae serovar copenhageni (strain Fiocruz L1-130).